The primary structure comprises 389 residues: Spore coat polysaccharide biosynthesis protein SpsC (389 aa).

Residue lysine 187 is modified to N6-(pyridoxal phosphate)lysine.

This sequence belongs to the DegT/DnrJ/EryC1 family. Requires pyridoxal 5'-phosphate as cofactor.

The protein operates within spore coat biogenesis; spore coat polysaccharide biosynthesis. The sequence is that of Spore coat polysaccharide biosynthesis protein SpsC (spsC) from Bacillus subtilis (strain 168).